A 260-amino-acid chain; its full sequence is Hydroxyethylthiazole kinase 1 (260 aa).

Residue M39 participates in substrate binding. Residues R115 and T160 each contribute to the ATP site. G187 contributes to the substrate binding site.

Belongs to the Thz kinase family. It depends on Mg(2+) as a cofactor.

It carries out the reaction 5-(2-hydroxyethyl)-4-methylthiazole + ATP = 4-methyl-5-(2-phosphooxyethyl)-thiazole + ADP + H(+). The protein operates within cofactor biosynthesis; thiamine diphosphate biosynthesis; 4-methyl-5-(2-phosphoethyl)-thiazole from 5-(2-hydroxyethyl)-4-methylthiazole: step 1/1. Its function is as follows. Catalyzes the phosphorylation of the hydroxyl group of 4-methyl-5-beta-hydroxyethylthiazole (THZ). The sequence is that of Hydroxyethylthiazole kinase 1 from Streptococcus pneumoniae (strain ATCC 700669 / Spain 23F-1).